The primary structure comprises 331 residues: UPF0324 membrane protein SAR0338 (331 aa).

11 consecutive transmembrane segments (helical) span residues 9–26 (FMIG…SFLA), 31–48 (ILDK…AILY), 69–88 (LLRF…DIIG), 93–115 (LLAI…NKLL), 122–144 (ALLL…APIF), 154–176 (SIGI…YAIF), 183–202 (YGAW…LAGG), 217–234 (LGRV…ILIM), 247–269 (ISIP…VTIP), 273–295 (LNIL…GLNV), and 308–330 (LMTI…HWLY).

Belongs to the UPF0324 family.

It localises to the cell membrane. This chain is UPF0324 membrane protein SAR0338, found in Staphylococcus aureus (strain MRSA252).